The sequence spans 194 residues: Mu-like prophage FluMu protein gp37 (194 aa).

To phage Mu protein gp37.

This chain is Mu-like prophage FluMu protein gp37, found in Haemophilus influenzae (strain ATCC 51907 / DSM 11121 / KW20 / Rd).